We begin with the raw amino-acid sequence, 658 residues long: D-ornithine--citrate ligase (658 aa).

It belongs to the IucA/IucC family.

The enzyme catalyses D-ornithine + citrate + ATP = N(5)-[(S)-citryl]-D-ornithine + AMP + diphosphate + H(+). Its pathway is siderophore biosynthesis. Involved in the biosynthesis of the siderophore staphyloferrin A. Catalyzes the ATP-dependent condensation of D-ornithine and citrate to form a citryl-D-ornithine intermediate. The chain is D-ornithine--citrate ligase from Staphylococcus aureus (strain NCTC 8325 / PS 47).